The chain runs to 314 residues: tRNA uridine(34) hydroxylase (314 aa).

A Rhodanese domain is found at 140–234 (ARDDVILIDT…YLEETPPDES (95 aa)). Cys-194 serves as the catalytic Cysteine persulfide intermediate.

The protein belongs to the TrhO family.

It catalyses the reaction uridine(34) in tRNA + AH2 + O2 = 5-hydroxyuridine(34) in tRNA + A + H2O. Its function is as follows. Catalyzes oxygen-dependent 5-hydroxyuridine (ho5U) modification at position 34 in tRNAs. In Acinetobacter baumannii (strain AYE), this protein is tRNA uridine(34) hydroxylase.